A 668-amino-acid chain; its full sequence is UvrABC system protein B (668 aa).

The Helicase ATP-binding domain maps to 31–416 (QGITDGVPAQ…RGHIIEQIIR (386 aa)). Residue 44–51 (GTTGSGKT) coordinates ATP. The Beta-hairpin signature appears at 97-120 (YYDYYQPEAYIARSDTYIEKSLLI). The Helicase C-terminal domain occupies 433 to 596 (QIDDLLEEIR…ITPQPIIKPI (164 aa)). The 36-residue stretch at 621–656 (EASIKTYEEAMYQAAQEFQFDEAAKYRDLMNAAKKQ) folds into the UVR domain.

It belongs to the UvrB family. Forms a heterotetramer with UvrA during the search for lesions. Interacts with UvrC in an incision complex.

The protein localises to the cytoplasm. The UvrABC repair system catalyzes the recognition and processing of DNA lesions. A damage recognition complex composed of 2 UvrA and 2 UvrB subunits scans DNA for abnormalities. Upon binding of the UvrA(2)B(2) complex to a putative damaged site, the DNA wraps around one UvrB monomer. DNA wrap is dependent on ATP binding by UvrB and probably causes local melting of the DNA helix, facilitating insertion of UvrB beta-hairpin between the DNA strands. Then UvrB probes one DNA strand for the presence of a lesion. If a lesion is found the UvrA subunits dissociate and the UvrB-DNA preincision complex is formed. This complex is subsequently bound by UvrC and the second UvrB is released. If no lesion is found, the DNA wraps around the other UvrB subunit that will check the other stand for damage. The chain is UvrABC system protein B from Chlamydia trachomatis serovar D (strain ATCC VR-885 / DSM 19411 / UW-3/Cx).